We begin with the raw amino-acid sequence, 295 residues long: UDP-3-O-acyl-N-acetylglucosamine deacetylase (295 aa).

3 residues coordinate Zn(2+): His75, His232, and Asp236. The active-site Proton donor is His259.

It belongs to the LpxC family. The cofactor is Zn(2+).

It carries out the reaction a UDP-3-O-[(3R)-3-hydroxyacyl]-N-acetyl-alpha-D-glucosamine + H2O = a UDP-3-O-[(3R)-3-hydroxyacyl]-alpha-D-glucosamine + acetate. It functions in the pathway glycolipid biosynthesis; lipid IV(A) biosynthesis; lipid IV(A) from (3R)-3-hydroxytetradecanoyl-[acyl-carrier-protein] and UDP-N-acetyl-alpha-D-glucosamine: step 2/6. Catalyzes the hydrolysis of UDP-3-O-myristoyl-N-acetylglucosamine to form UDP-3-O-myristoylglucosamine and acetate, the committed step in lipid A biosynthesis. This Helicobacter pylori (strain J99 / ATCC 700824) (Campylobacter pylori J99) protein is UDP-3-O-acyl-N-acetylglucosamine deacetylase.